The following is a 334-amino-acid chain: Malate dehydrogenase, cytoplasmic (334 aa).

S2 carries the post-translational modification N-acetylserine. Residues G11–A17 and D42 each bind NAD(+). R92 and R98 together coordinate substrate. N105 contributes to the NAD(+) binding site. At K110 the chain carries N6-succinyllysine. Q112 serves as a coordination point for NAD(+). Residues K118 and K121 each carry the N6-acetyllysine modification. Residue V129 to N131 coordinates NAD(+). Substrate-binding residues include N131 and R162. H187 acts as the Proton acceptor in catalysis. K214 is subject to N6-succinyllysine. Phosphoserine is present on S217. R230 is modified (omega-N-methylarginine). S241 is modified (phosphoserine). Position 298 is an N6-acetyllysine; alternate (K298). N6-succinyllysine; alternate is present on K298. At S309 the chain carries Phosphoserine. An N6-succinyllysine modification is found at K318. 2 positions are modified to phosphoserine: S332 and S333.

This sequence belongs to the LDH/MDH superfamily. MDH type 2 family. In terms of assembly, homodimer. ISGylated. Post-translationally, acetylation at Lys-118 dramatically enhances enzymatic activity and promotes adipogenic differentiation.

The protein resides in the cytoplasm. It is found in the cytosol. It carries out the reaction (S)-malate + NAD(+) = oxaloacetate + NADH + H(+). The catalysed reaction is (2R)-2-hydroxy-3-(4-hydroxyphenyl)propanoate + NAD(+) = 3-(4-hydroxyphenyl)pyruvate + NADH + H(+). It catalyses the reaction (S)-2-hydroxyglutarate + NAD(+) = 2-oxoglutarate + NADH + H(+). Its function is as follows. Catalyzes the reduction of aromatic alpha-keto acids in the presence of NADH. Plays essential roles in the malate-aspartate shuttle and the tricarboxylic acid cycle, important in mitochondrial NADH supply for oxidative phosphorylation. Catalyzes the reduction of 2-oxoglutarate to 2-hydroxyglutarate, leading to elevated reactive oxygen species (ROS). This Homo sapiens (Human) protein is Malate dehydrogenase, cytoplasmic.